The following is a 488-amino-acid chain: MWESKFSKEGLTFDDVLLVPAKSEVLPRDVDLSVELTKTLKLNIPVISAGMDTVTESAMAIAMARQGGLGIIHKNMSIEQQAEQVDKVKRSERGVITNPFFLTPDHQVFDAEHLMGKYRISGVPIVNNEEDQKLVGIITNRDLRFISDYSMKISDVMTKEELVTASVGTTLDEAEKILQKHKIEKLPLVDDQNKLKGLITIKDIEKVIEFPNSSKDIHGRLIVGAAVGVTGDTMTRVKKLVEANVDVIVIDTAHGHSQGVLNTVTKIRETYPELNIIAGNVATAEATRALIEAGADVVKVGIGPGSICTTRVVAGVGVPQITAIYDCATEARKHGKTIIADGGIKFSGDITKALAAGGHAVMLGSLLAGTSESPGETEIYQGRRFKVYRGMGSVAAMEKGSKDRYFQEENKKFVPEGIEGRTPYKGPVEETVYQLVGGLRSGMGYCGSKDLRALREEAQFIRMTGAGLRESHPHDVQITKESPNYTIS.

2 consecutive CBS domains span residues 95–153 (VITN…SMKI) and 157–214 (MTKE…PNSS). NAD(+)-binding positions include D251 and 301-303 (GIG). Positions 303 and 305 each coordinate K(+). Residue S306 coordinates IMP. C308 contributes to the K(+) binding site. Residue C308 is the Thioimidate intermediate of the active site. Residues 341 to 343 (DGG), 364 to 365 (GS), and 388 to 392 (YRGMG) contribute to the IMP site. R404 functions as the Proton acceptor in the catalytic mechanism. IMP is bound at residue E416. K(+)-binding residues include E470, S471, and H472.

It belongs to the IMPDH/GMPR family. As to quaternary structure, homotetramer. The cofactor is K(+).

It carries out the reaction IMP + NAD(+) + H2O = XMP + NADH + H(+). The protein operates within purine metabolism; XMP biosynthesis via de novo pathway; XMP from IMP: step 1/1. Its activity is regulated as follows. Mycophenolic acid (MPA) is a non-competitive inhibitor that prevents formation of the closed enzyme conformation by binding to the same site as the amobile flap. In contrast, mizoribine monophosphate (MZP) is a competitive inhibitor that induces the closed conformation. MPA is a potent inhibitor of mammalian IMPDHs but a poor inhibitor of the bacterial enzymes. MZP is a more potent inhibitor of bacterial IMPDH. In terms of biological role, catalyzes the conversion of inosine 5'-phosphate (IMP) to xanthosine 5'-phosphate (XMP), the first committed and rate-limiting step in the de novo synthesis of guanine nucleotides, and therefore plays an important role in the regulation of cell growth. This is Inosine-5'-monophosphate dehydrogenase from Bacillus subtilis (strain 168).